The following is a 451-amino-acid chain: Chromosomal replication initiator protein DnaA (451 aa).

Residues M1–D77 form a domain I, interacts with DnaA modulators region. A domain II region spans residues D77–S110. The tract at residues D111–A329 is domain III, AAA+ region. Residues G155, G157, K158, and T159 each coordinate ATP. Residues N330–K451 are domain IV, binds dsDNA.

Belongs to the DnaA family. As to quaternary structure, oligomerizes as a right-handed, spiral filament on DNA at oriC.

It localises to the cytoplasm. Functionally, plays an essential role in the initiation and regulation of chromosomal replication. ATP-DnaA binds to the origin of replication (oriC) to initiate formation of the DNA replication initiation complex once per cell cycle. Binds the DnaA box (a 9 base pair repeat at the origin) and separates the double-stranded (ds)DNA. Forms a right-handed helical filament on oriC DNA; dsDNA binds to the exterior of the filament while single-stranded (ss)DNA is stabiized in the filament's interior. The ATP-DnaA-oriC complex binds and stabilizes one strand of the AT-rich DNA unwinding element (DUE), permitting loading of DNA polymerase. After initiation quickly degrades to an ADP-DnaA complex that is not apt for DNA replication. Binds acidic phospholipids. The half-life of ATP-DnaA is 12 minutes at 37 degrees Celsius, in E.coli the half-life is about 41 minutes. The polypeptide is Chromosomal replication initiator protein DnaA (Streptococcus pyogenes serotype M1).